A 138-amino-acid chain; its full sequence is Protein transport protein got1 homolog (138 aa).

Residues 1 to 7 (MFTDQQK) lie on the Cytoplasmic side of the membrane. The chain crosses the membrane as a helical span at residues 8–28 (IGAMLSAMGLFFGFLGVLLFL). The Lumenal segment spans residues 29–30 (DR). A helical transmembrane segment spans residues 31–51 (NLLALGNLLLVSGIVLILGLQ). The Cytoplasmic portion of the chain corresponds to 52 to 62 (KTTKFFAQKKK). A helical membrane pass occupies residues 63-82 (IKGTILFFFGIVVLLVTRWT). Residues 83-87 (FVGMV) are Lumenal-facing. The helical transmembrane segment at 88 to 108 (IEIFGFVNLFGDAFPIVISIL) threads the bilayer. Residues 109-138 (RKLPIIGNILNHPLVNRLLQKADSGNELPF) are Cytoplasmic-facing.

The protein belongs to the GOT1 family.

The protein localises to the golgi apparatus membrane. Functionally, may be involved in fusion of ER-derived transport vesicles with the Golgi complex. The chain is Protein transport protein got1 homolog (golt1) from Dictyostelium discoideum (Social amoeba).